The sequence spans 870 residues: S-linalool synthase (870 aa).

Positions 547, 551, 689, 693, and 697 each coordinate Mg(2+). Positions 547-551 match the DDXXD motif motif; that stretch reads DDFFD.

The protein belongs to the terpene synthase family. Requires Mg(2+) as cofactor. The cofactor is Mn(2+). Highly expressed in cells of the transmitting tract of the stigma and style and in the epidermal cells of petals, as well as in stamens.

It carries out the reaction (2E)-geranyl diphosphate + H2O = (S)-linalool + diphosphate. Involved in the biosynthesis of the acyclic monoterpene S-linalool, a major component of the strong sweet scent of the C.breweri flowers. This is S-linalool synthase (LIS) from Clarkia breweri (Fairy fans).